The sequence spans 398 residues: MVKRVHIFDWHKEHAKKVEEFAGWEMPIWYSSIKEEHLAVRNGVGIFDVSHMGEFIFRGKDALEFLQYVTTNDISKPPAISGTYTLVLNERGAVKDETLVFNLGNDTYMMVCDSDAFEKLEAWFNAIKRGIEKFGSIDLEIENKTYDMAMFSVQGPKARDLAKDLFGIDINDLWWFQAKEVELDGIKMLLSRSGYTGENGWEVYFEDKNPYHPNPEKRGRPEKALHVWERILEEGEKYGIKPAGLGARDTLRLEAGYTLYGNETKELQLLSTDIDEVTPLQANLDFAIFWDKEFIGKEALLKQKERGLGRKMVHFKMVDRGIPREGYKVLANGEVIGEVTSGTLSPLLGIGIGIAFVKEEYAKPGLEIEVEIRGKPKRAVTVSPPFYDPKKYGAFREE.

The protein belongs to the GcvT family. In terms of assembly, the glycine cleavage system is composed of four proteins: P, T, L and H.

It catalyses the reaction N(6)-[(R)-S(8)-aminomethyldihydrolipoyl]-L-lysyl-[protein] + (6S)-5,6,7,8-tetrahydrofolate = N(6)-[(R)-dihydrolipoyl]-L-lysyl-[protein] + (6R)-5,10-methylene-5,6,7,8-tetrahydrofolate + NH4(+). The glycine cleavage system catalyzes the degradation of glycine. The sequence is that of Probable aminomethyltransferase from Thermococcus gammatolerans (strain DSM 15229 / JCM 11827 / EJ3).